We begin with the raw amino-acid sequence, 337 residues long: Anthranilate phosphoribosyltransferase (337 aa).

Residues G81, G84–D85, S89, N91–T94, K109–S117, and A121 each bind 5-phospho-alpha-D-ribose 1-diphosphate. Residue G81 participates in anthranilate binding. Residue S93 participates in Mg(2+) binding. Residue N112 coordinates anthranilate. R167 is a binding site for anthranilate. 2 residues coordinate Mg(2+): D226 and E227.

It belongs to the anthranilate phosphoribosyltransferase family. As to quaternary structure, homodimer. The cofactor is Mg(2+).

The enzyme catalyses N-(5-phospho-beta-D-ribosyl)anthranilate + diphosphate = 5-phospho-alpha-D-ribose 1-diphosphate + anthranilate. Its pathway is amino-acid biosynthesis; L-tryptophan biosynthesis; L-tryptophan from chorismate: step 2/5. Functionally, catalyzes the transfer of the phosphoribosyl group of 5-phosphorylribose-1-pyrophosphate (PRPP) to anthranilate to yield N-(5'-phosphoribosyl)-anthranilate (PRA). The chain is Anthranilate phosphoribosyltransferase from Methylorubrum populi (strain ATCC BAA-705 / NCIMB 13946 / BJ001) (Methylobacterium populi).